Reading from the N-terminus, the 342-residue chain is Phosphate acyltransferase (342 aa).

It belongs to the PlsX family. In terms of assembly, homodimer. Probably interacts with PlsY.

The protein resides in the cytoplasm. It carries out the reaction a fatty acyl-[ACP] + phosphate = an acyl phosphate + holo-[ACP]. The protein operates within lipid metabolism; phospholipid metabolism. In terms of biological role, catalyzes the reversible formation of acyl-phosphate (acyl-PO(4)) from acyl-[acyl-carrier-protein] (acyl-ACP). This enzyme utilizes acyl-ACP as fatty acyl donor, but not acyl-CoA. The chain is Phosphate acyltransferase from Alkalilimnicola ehrlichii (strain ATCC BAA-1101 / DSM 17681 / MLHE-1).